We begin with the raw amino-acid sequence, 201 residues long: Proteasome subunit beta 1 (201 aa).

Met1 is a propeptide (removed in mature form; by autocatalysis). Catalysis depends on Thr2, which acts as the Nucleophile.

Belongs to the peptidase T1B family. As to quaternary structure, the 20S proteasome core is composed of 14 alpha and 14 beta subunits that assemble into four stacked heptameric rings, resulting in a barrel-shaped structure. The two inner rings, each composed of seven catalytic beta subunits, are sandwiched by two outer rings, each composed of seven alpha subunits. The catalytic chamber with the active sites is on the inside of the barrel. Has a gated structure, the ends of the cylinder being occluded by the N-termini of the alpha-subunits. Is capped at one or both ends by the proteasome regulatory ATPase, PAN.

The protein localises to the cytoplasm. It catalyses the reaction Cleavage of peptide bonds with very broad specificity.. The formation of the proteasomal ATPase PAN-20S proteasome complex, via the docking of the C-termini of PAN into the intersubunit pockets in the alpha-rings, triggers opening of the gate for substrate entry. Interconversion between the open-gate and close-gate conformations leads to a dynamic regulation of the 20S proteasome proteolysis activity. In terms of biological role, component of the proteasome core, a large protease complex with broad specificity involved in protein degradation. This Pyrobaculum calidifontis (strain DSM 21063 / JCM 11548 / VA1) protein is Proteasome subunit beta 1.